We begin with the raw amino-acid sequence, 215 residues long: Protein NETWORKED 3B (215 aa).

Residues 5–90 enclose the NAB domain; sequence SKWWWIGANH…QKHDLLIKTS (86 aa). Positions 134–165 form a coiled coil; the sequence is DETMKEELEILREENRVYKEKKEVVTRLLANL.

Belongs to the NET family. Interacts with F-actin.

Its function is as follows. Plant-specific actin binding protein. May be part of a membrane-cytoskeletal adapter complex. This chain is Protein NETWORKED 3B, found in Arabidopsis thaliana (Mouse-ear cress).